The sequence spans 207 residues: Nuclear transcription factor Y subunit beta (207 aa).

An a domain region spans residues 1–52 (MTMDGDSSTTDASQLGISADYIGGSHYVIQPHDDTEDSMNDHEDTNGSKESF). The tract at residues 27–52 (YVIQPHDDTEDSMNDHEDTNGSKESF) is disordered. The span at 39-52 (MNDHEDTNGSKESF) shows a compositional bias: basic and acidic residues. Residues 53-142 (REQDIYLPIA…PLKLYLQKFR (90 aa)) form a b domain region. A DNA-binding region spans residues 59-65 (LPIANVA). Residues 86-97 (VQECVSEFISFI) are subunit association domain (SAD). A Glycyl lysine isopeptide (Lys-Gly) (interchain with G-Cter in ubiquitin) cross-link involves residue K140. Positions 143 to 207 (EAMKGEKGIG…ISGVQQIQFS (65 aa)) are c domain.

The protein belongs to the NFYB/HAP3 subunit family. As to quaternary structure, heterotrimeric transcription factor composed of three components, NF-YA, NF-YB and NF-YC. NF-YB and NF-YC must interact and dimerize for NF-YA association and DNA binding. Interacts with C1QBP. Monoubiquitination at Lys-140 plays an important role in transcriptional activation by allowing the deposition of histone H3 methylations as well as histone H2B monoubiquitination at 'Lys-121'.

The protein localises to the nucleus. In terms of biological role, component of the sequence-specific heterotrimeric transcription factor (NF-Y) which specifically recognizes a 5'-CCAAT-3' box motif found in the promoters of its target genes. NF-Y can function as both an activator and a repressor, depending on its interacting cofactors. This Homo sapiens (Human) protein is Nuclear transcription factor Y subunit beta (NFYB).